A 165-amino-acid chain; its full sequence is MKTSRLPIAIQQAVMRRLREKLAQANLKLGRNYPEPKLSYTQRGTSAGTAWLESYKIRLNPVLLLENSEAFIEEVVPHELAHLLVWKHFGRVAPHGKEWKWMMENVLGVPARRTHQFELQSVRRNTFPYRCKCQEHQLTVRRHNRVVRGEAVYRCVHCGEQLVAK.

One can recognise a SprT-like domain in the interval 20-163 (EKLAQANLKL…RCVHCGEQLV (144 aa)). A Zn(2+)-binding site is contributed by H78. The active site involves E79. Position 82 (H82) interacts with Zn(2+).

Belongs to the SprT family. It depends on Zn(2+) as a cofactor.

Its subcellular location is the cytoplasm. This is Protein SprT from Shigella boydii serotype 18 (strain CDC 3083-94 / BS512).